Here is a 170-residue protein sequence, read N- to C-terminus: MKDNERRILLGRVVGGFGLRGEIKMESWTEPRDAIFRYQPWLLRSPTGTESMLNGARGYDTGKRLIATFPGINDRNAVEAICGTEIYVPRSALPPPHPDEYYWVDLEGLQVHTLEGVVLGSVSHLFSNGANDVVVIHGERERLIPFVQPDYVKSVDFEAERIVVDWDPEF.

A PRC barrel domain is found at 97–170 (HPDEYYWVDL…RIVVDWDPEF (74 aa)).

This sequence belongs to the RimM family. As to quaternary structure, binds ribosomal protein uS19.

The protein localises to the cytoplasm. Its function is as follows. An accessory protein needed during the final step in the assembly of 30S ribosomal subunit, possibly for assembly of the head region. Essential for efficient processing of 16S rRNA. May be needed both before and after RbfA during the maturation of 16S rRNA. It has affinity for free ribosomal 30S subunits but not for 70S ribosomes. In Xylella fastidiosa (strain M12), this protein is Ribosome maturation factor RimM.